A 500-amino-acid chain; its full sequence is NAD(P)H-quinone oxidoreductase chain 4, chloroplastic (500 aa).

Helical transmembrane passes span F4 to F24, V31 to F51, G84 to A104, S111 to F129, L134 to M154, F167 to L187, A208 to I228, H242 to V262, A272 to A292, I305 to D325, G330 to G350, L386 to T406, I416 to M436, and F463 to F483.

Belongs to the complex I subunit 4 family.

The protein localises to the plastid. It is found in the chloroplast thylakoid membrane. It carries out the reaction a plastoquinone + NADH + (n+1) H(+)(in) = a plastoquinol + NAD(+) + n H(+)(out). The catalysed reaction is a plastoquinone + NADPH + (n+1) H(+)(in) = a plastoquinol + NADP(+) + n H(+)(out). In Manihot esculenta (Cassava), this protein is NAD(P)H-quinone oxidoreductase chain 4, chloroplastic.